The chain runs to 66 residues: Rho-elapitoxin-Da1b (66 aa).

Intrachain disulfides connect C3-C24, C17-C42, C46-C58, and C59-C64.

The protein belongs to the three-finger toxin family. Short-chain subfamily. Aminergic toxin sub-subfamily. Expressed by the venom gland.

The protein resides in the secreted. In terms of biological role, non-competitive antagonist of alpha-2 adrenergic receptors (ADRA2) in smooth muscles, and partial antagonist of D3 dopamine receptors (DRD3) (inhibits 25% of methylspiperone binding to this receptor). Also shows a low antagonism on D2 dopamine receptors (DRD2) (short isoform). Shows high affinity to adrenergic receptors (Ki=14 nM (ADRA2A), Ki=73 nM (ADRA2B), and Ki=38 nM (ADRA2C)). Increases heart rate and blood catecholamine concentrations. This Dendroaspis angusticeps (Eastern green mamba) protein is Rho-elapitoxin-Da1b.